The sequence spans 463 residues: Argininosuccinate lyase (463 aa).

Belongs to the lyase 1 family. Argininosuccinate lyase subfamily.

The protein resides in the cytoplasm. It carries out the reaction 2-(N(omega)-L-arginino)succinate = fumarate + L-arginine. The protein operates within amino-acid biosynthesis; L-arginine biosynthesis; L-arginine from L-ornithine and carbamoyl phosphate: step 3/3. The sequence is that of Argininosuccinate lyase from Dinoroseobacter shibae (strain DSM 16493 / NCIMB 14021 / DFL 12).